We begin with the raw amino-acid sequence, 413 residues long: Transcription factor bHLH23 (413 aa).

Positions 40–75 (SSQTQTPSCDPPLILRGSGSGDGEGNGPLPQPPPPL) are disordered. At T186 the chain carries Phosphothreonine. S191 carries the phosphoserine modification. Disordered stretches follow at residues 232–278 (TEPV…RSRA) and 391–413 (ETEQ…KMFS). The span at 246–257 (TDERKRKTREET) shows a compositional bias: basic and acidic residues. One can recognise a bHLH domain in the interval 277–326 (RAAIMHKLSERRRRQKINEMMKALQELLPRCTKTDRSSMLDDVIEYVKSL).

In terms of assembly, homodimer. Expressed constitutively in leaves, stems, and flowers.

It is found in the nucleus. The polypeptide is Transcription factor bHLH23 (BHLH23) (Arabidopsis thaliana (Mouse-ear cress)).